A 156-amino-acid polypeptide reads, in one-letter code: Cell division protein SepF (156 aa).

The span at 23 to 36 shows a compositional bias: basic and acidic residues; that stretch reads SYEKEQTDMKKQQD. The disordered stretch occupies residues 23 to 49; sequence SYEKEQTDMKKQQDPPEQQDVTFPKAQ.

This sequence belongs to the SepF family. Homodimer. Interacts with FtsZ.

Its subcellular location is the cytoplasm. Functionally, cell division protein that is part of the divisome complex and is recruited early to the Z-ring. Probably stimulates Z-ring formation, perhaps through the cross-linking of FtsZ protofilaments. Its function overlaps with FtsA. The chain is Cell division protein SepF from Bacillus anthracis (strain CDC 684 / NRRL 3495).